The following is a 162-amino-acid chain: RNA pyrophosphohydrolase (162 aa).

Positions 11–155 constitute a Nudix hydrolase domain; it reads PYRPCVGIVL…KRAVYEEVVA (145 aa). The Nudix box signature appears at 45-66; the sequence is GGIDEGEKPREAALRELWEETG.

This sequence belongs to the Nudix hydrolase family. RppH subfamily. It depends on a divalent metal cation as a cofactor.

Accelerates the degradation of transcripts by removing pyrophosphate from the 5'-end of triphosphorylated RNA, leading to a more labile monophosphorylated state that can stimulate subsequent ribonuclease cleavage. In Cereibacter sphaeroides (strain ATCC 17023 / DSM 158 / JCM 6121 / CCUG 31486 / LMG 2827 / NBRC 12203 / NCIMB 8253 / ATH 2.4.1.) (Rhodobacter sphaeroides), this protein is RNA pyrophosphohydrolase.